An 857-amino-acid chain; its full sequence is Cation/H(+) antiporter 25 (857 aa).

Transmembrane regions (helical) follow at residues 65–85, 93–110, 122–142, 161–181, 194–214, 227–247, 259–279, 313–333, 385–405, 413–435, and 447–467; these read FSTF…VYVL, RIVC…SMLG, PIAN…FFFL, YIAA…GAAL, SIGG…YTVL, FAMS…VLFE, YSVI…LLVV, FLTD…GLVV, IYMS…AALF, SLTL…LHWI, and VMVL…SFLY. Phosphoserine is present on Ser-855.

It belongs to the monovalent cation:proton antiporter 2 (CPA2) transporter (TC 2.A.37) family. CHX (TC 2.A.37.4) subfamily. In terms of tissue distribution, specifically expressed in pollen.

The protein resides in the membrane. May operate as a cation/H(+) antiporter. This chain is Cation/H(+) antiporter 25 (CHX25), found in Arabidopsis thaliana (Mouse-ear cress).